Reading from the N-terminus, the 227-residue chain is Cytosolic-abundant heat soluble protein 106094 (227 aa).

Residues 1 to 28 are disordered; sequence MEAMNMNIPRDAMFVPPPESEQNGYHEK. Residues 90–140 adopt a coiled-coil conformation; sequence VEEARRDYAAKTRENEMLGQQYEKELERKSEAYRKHQEVEADKIRKELEKQ. 2 CAHS motif regions span residues 122 to 140 and 159 to 177; these read YRKH…LEKQ and QKRM…MDRE. Positions 198-227 are disordered; the sequence is LDSSAAGTESGGHVVSQSEKFTERNREMKR. The span at 217 to 227 shows a compositional bias: basic and acidic residues; it reads KFTERNREMKR.

This sequence belongs to the Cytosolic-abundant heat soluble protein (CAHS) family.

The protein resides in the cytoplasm. Functionally, CAHS proteins are cytosolic heat soluble proteins that seem to contribute to the anhydrobiosis in tardigrades, but their specific mechanisms are yet to be identified. It is possible that protection during anhydrobiosis might occur via the stabilization of vitrifying small molecules such as sugars, but not via the direct glass transition of CAHS proteins themselves. The sequence is that of Cytosolic-abundant heat soluble protein 106094 from Paramacrobiotus richtersi (Water bear).